Here is a 378-residue protein sequence, read N- to C-terminus: D-galactarolactone cycloisomerase (378 aa).

Mg(2+)-binding residues include D194, E220, and E246. H296 serves as the catalytic Proton acceptor.

The protein belongs to the mandelate racemase/muconate lactonizing enzyme family. Homooctamer. Requires Mg(2+) as cofactor.

It carries out the reaction D-glucaro-1,4-lactone = 5-dehydro-4-deoxy-D-glucarate + H(+). The catalysed reaction is D-galactaro-1,4-lactone = 5-dehydro-4-deoxy-D-glucarate + H(+). The protein operates within carbohydrate acid metabolism; D-galacturonate degradation via prokaryotic oxidative pathway. Functionally, catalyzes the ring opening of D-galactaro-1,4-lactone to yield 5-keto-4-deoxy-D-glucarate (KDG) via a beta-elimination reaction. This is a step in the oxidative degradation pathway of D-galacturonate, which allows A.tumefaciens to utilize D-galacturonate as a sole carbon source. To a lesser extent, can also use D-glucaro-1,4-lactone as substrate to produce KDG, but cannot use D-galactaro-1,5-lactone, D-glucaro-6,3-lactone and linear D-glucarate. This Agrobacterium fabrum (strain C58 / ATCC 33970) (Agrobacterium tumefaciens (strain C58)) protein is D-galactarolactone cycloisomerase (gci).